The sequence spans 337 residues: Viral cathepsin (337 aa).

The N-terminal stretch at 1-16 (MNKILILLLLVSAVLT) is a signal peptide. Residues 17–126 (SHDQVVAVTI…VVDGPGQRQR (110 aa)) constitute a propeptide, activation peptide. 3 cysteine pairs are disulfide-bonded: cysteine 147–cysteine 188, cysteine 181–cysteine 221, and cysteine 276–cysteine 324. Cysteine 150 is a catalytic residue. Active-site residues include histidine 283 and asparagine 303.

Belongs to the peptidase C1 family. Post-translationally, synthesized as an inactive proenzyme and activated by proteolytic removal of the inhibitory propeptide.

It carries out the reaction Endopeptidase of broad specificity, hydrolyzing substrates of both cathepsin L and cathepsin B.. Its function is as follows. Cysteine protease that plays an essential role in host liquefaction to facilitate horizontal transmission of the virus. May participate in the degradation of foreign protein expressed by the baculovirus system. This chain is Viral cathepsin (VCATH), found in Mamestra configurata (bertha armyworm).